The following is a 58-amino-acid chain: Preprotein translocase subunit SecG (58 aa).

The Cytoplasmic segment spans residues 1–32; that stretch reads MAQKKKSSGSGLMSSAGLMTYYDADKKAIHVQ. A helical membrane pass occupies residues 33–54; that stretch reads PKTVFIFGAICGIVILAFSAGF. Topologically, residues 55–58 are extracellular; the sequence is GLWP.

Belongs to the SEC61-beta family. Component of the protein translocase complex. Heterotrimer consisting of alpha (SecY), beta (SecG) and gamma (SecE) subunits. Can form oligomers of the heterotrimer.

The protein localises to the cell membrane. Its function is as follows. Involved in protein export. The function of the beta subunit is unknown, but it may be involved in stabilization of the trimeric complex. In Methanococcoides burtonii (strain DSM 6242 / NBRC 107633 / OCM 468 / ACE-M), this protein is Preprotein translocase subunit SecG.